The following is a 225-amino-acid chain: Single-pass membrane and coiled-coil domain-containing protein 3 (225 aa).

Residues 69 to 92 (IIQAMTKIQKELQKIDEALKDQLE) adopt a coiled-coil conformation. Residues 155–175 (IGTSLLGSIGVAVLSLGIDMI) form a helical membrane-spanning segment. Positions 182–209 (AVERTQLQAAIKSYEKHLEEFKAASAKY) form a coiled coil.

Its subcellular location is the membrane. The chain is Single-pass membrane and coiled-coil domain-containing protein 3 (Smco3) from Mus musculus (Mouse).